The following is a 330-amino-acid chain: Tetraacyldisaccharide 4'-kinase (330 aa).

58 to 65 serves as a coordination point for ATP; sequence TVGGSGKT.

It belongs to the LpxK family.

It carries out the reaction a lipid A disaccharide + ATP = a lipid IVA + ADP + H(+). It functions in the pathway glycolipid biosynthesis; lipid IV(A) biosynthesis; lipid IV(A) from (3R)-3-hydroxytetradecanoyl-[acyl-carrier-protein] and UDP-N-acetyl-alpha-D-glucosamine: step 6/6. In terms of biological role, transfers the gamma-phosphate of ATP to the 4'-position of a tetraacyldisaccharide 1-phosphate intermediate (termed DS-1-P) to form tetraacyldisaccharide 1,4'-bis-phosphate (lipid IVA). This Shewanella halifaxensis (strain HAW-EB4) protein is Tetraacyldisaccharide 4'-kinase.